We begin with the raw amino-acid sequence, 671 residues long: Beta-galactosidase 1 (671 aa).

The N-terminal stretch at 1 to 18 (MKLIVLIFFLLFINLNYC) is a signal peptide. The active-site Proton donor is the Glu200. Asn228 is a glycosylation site (N-linked (GlcNAc...) asparagine). The active-site Nucleophile is Glu288. 7 N-linked (GlcNAc...) asparagine glycosylation sites follow: Asn321, Asn391, Asn400, Asn499, Asn509, Asn564, and Asn595.

The protein belongs to the glycosyl hydrolase 35 family.

The protein localises to the lysosome. The catalysed reaction is Hydrolysis of terminal non-reducing beta-D-galactose residues in beta-D-galactosides.. Cleaves beta-linked terminal galactosyl residues from gangliosides, glycoproteins, and glycosaminoglycans. The polypeptide is Beta-galactosidase 1 (glb1) (Dictyostelium discoideum (Social amoeba)).